Reading from the N-terminus, the 217-residue chain is 3-oxo-tetronate 4-phosphate decarboxylase (217 aa).

His-93 and His-95 together coordinate Zn(2+). The Proton donor role is filled by Tyr-120.

Belongs to the aldolase class II family. AraD/FucA subfamily. It depends on Zn(2+) as a cofactor.

It carries out the reaction 3-dehydro-4-O-phospho-D-erythronate + H(+) = dihydroxyacetone phosphate + CO2. It catalyses the reaction 3-dehydro-4-O-phospho-L-erythronate + H(+) = dihydroxyacetone phosphate + CO2. Catalyzes the decarboxylation of 3-oxo-tetronate 4-phosphate to dihydroxyacetone phosphate (DHAP) and CO(2). This chain is 3-oxo-tetronate 4-phosphate decarboxylase, found in Cupriavidus necator (strain ATCC 17699 / DSM 428 / KCTC 22496 / NCIMB 10442 / H16 / Stanier 337) (Ralstonia eutropha).